The primary structure comprises 182 residues: tRNA-splicing endonuclease (182 aa).

Active-site residues include Y119, H127, and K158.

Belongs to the tRNA-intron endonuclease family. Archaeal short subfamily. Homotetramer; although the tetramer contains four active sites, only two participate in the cleavage. Therefore, it should be considered as a dimer of dimers.

It carries out the reaction pretRNA = a 3'-half-tRNA molecule with a 5'-OH end + a 5'-half-tRNA molecule with a 2',3'-cyclic phosphate end + an intron with a 2',3'-cyclic phosphate and a 5'-hydroxyl terminus.. Its function is as follows. Endonuclease that removes tRNA introns. Cleaves pre-tRNA at the 5'- and 3'-splice sites to release the intron. The products are an intron and two tRNA half-molecules bearing 2',3' cyclic phosphate and 5'-OH termini. Recognizes a pseudosymmetric substrate in which 2 bulged loops of 3 bases are separated by a stem of 4 bp. The protein is tRNA-splicing endonuclease of Saccharolobus islandicus (strain M.14.25 / Kamchatka #1) (Sulfolobus islandicus).